A 296-amino-acid polypeptide reads, in one-letter code: Trimeric intracellular cation channel type A (296 aa).

Topologically, residues 1-19 (MELPGALQLGELAAAFASV) are lumenal. Residues 20–37 (PVFPLFDAAYFIVSVLYL) traverse the membrane as a helical segment. The Cytoplasmic portion of the chain corresponds to 38-51 (KYEPGAVEMSRKSP). A helical transmembrane segment spans residues 52 to 73 (FASWLCAMLHCFGSYILADLLL). Ca(2+) is bound at residue Gly74. Topologically, residues 74 to 85 (GESPIHYFSNNS) are lumenal. A helical membrane pass occupies residues 86–103 (SVILATAVWYLIFFCPMN). The Cytoplasmic portion of the chain corresponds to 104 to 107 (LFYK). Residues 108 to 126 (CVSFLPVKLIFVAMKEVVR) form a helical membrane-spanning segment. Residues Lys122 and Arg126 each coordinate a 1,2-diacyl-sn-glycero-3-phospho-(1D-myo-inositol-4,5-bisphosphate). The Lumenal portion of the chain corresponds to 127–144 (VRKIAAGVHHAHHQYHHG). The helical transmembrane segment at 145 to 162 (WFIMMATGWVKGSGVALM) threads the bilayer. At 163–183 (SNFEQLLRGVWRPETNEILHM) the chain is on the cytoplasmic side. The chain crosses the membrane as a helical span at residues 184–201 (SFPTKASLYGTVLFTLQQ). At 202 to 209 (THWLPVSE) the chain is on the lumenal side. Residues 210–230 (ANLVFFFTMFMIVCKVFMTAT) form a helical membrane-spanning segment. Residues 231-273 (HSHASPFAPVEGFICPVFFGSVSSGHTSHHNQHGHSHEASYQP) are Cytoplasmic-facing. Residues 256–296 (HTSHHNQHGHSHEASYQPPPPVKSKEELNEGTRKRKAKKAE) form a disordered region. Basic and acidic residues predominate over residues 278-287 (KSKEELNEGT).

It belongs to the TMEM38 family. As to quaternary structure, homotrimer; conformation seems to be controled by binding to diacylglycerol (DAG).

It localises to the sarcoplasmic reticulum membrane. The protein resides in the nucleus membrane. The catalysed reaction is K(+)(in) = K(+)(out). Its activity is regulated as follows. Channel activity is activated by a change of voltage within the sarcoplasmic reticulum lumen and blocked by luminal high Ca(2+) levels. Its function is as follows. Intracellular monovalent cation channel required for maintenance of rapid intracellular calcium release. Acts as a potassium counter-ion channel that functions in synchronization with calcium release from intracellular stores. Opened by a change of voltage within the sarcoplasmic reticulum lumen. This is Trimeric intracellular cation channel type A (TMEM38A) from Gallus gallus (Chicken).